The following is a 470-amino-acid chain: MPRPLYLSPDRLFPSDPAQRDIARRLYKAVAGLPIVSPHGHTDPAWFAGDAPFGNAAELLLHPDHYVFRMLYSQGVSLDALGIGNADADPRESWRLFAENYHLFRATPSRMWMDWVFAEVFGFDVQLSAETSDLYYDRITEALAIDAFRPRALFDRFGIEVIATTESPLDSLDHHAVIRAANASGEWGGRVITAYRPDPVVDPEFEGFRDNLARFSNLSGEDAFSYSGYLAAHRKRRAFFASMGATSTDHGHPSAATADLSETQAEALFARVTGEDMSAADAELFRAHMLTVMAGMSLDDGLVMQIHPGAFRNHNPWLFANHGRDKGADIPTATDYVHALRPLLGRYGNEADLTIILFTLDETSYARELAPLAGHYPALKLGPAWWFHDSPEGMRRFRSQMTETAGFYNTVGFNDDTRAFLSIPARHDVARRIDCGFLAQLVSEHRLEEWEAAELAADLSYNLAKASYKL.

The protein belongs to the metallo-dependent hydrolases superfamily. Uronate isomerase family.

It carries out the reaction D-glucuronate = D-fructuronate. It catalyses the reaction aldehydo-D-galacturonate = keto-D-tagaturonate. It participates in carbohydrate metabolism; pentose and glucuronate interconversion. This chain is Uronate isomerase, found in Sphingopyxis alaskensis (strain DSM 13593 / LMG 18877 / RB2256) (Sphingomonas alaskensis).